The following is a 485-amino-acid chain: E3 ubiquitin-protein ligase RNF8 (485 aa).

The region spanning 38 to 92 (VTVGRGFGVTYQLVSKICPLMISRNHCVLKQNPEGQWTIMDNKSLNGVWLNRARL) is the FHA domain. Residues 68–72 (QNPEG) are required for interaction with PIWIL1. Ser157 bears the Phosphoserine mark. The segment at 181–220 (CESGQPVKSQGKGEVASTPSDNLDPKLTALEPSKTTGAPI) is disordered. The segment at 403–441 (CIICSEYFIEAVTLNCAHSFCSYCINEWMKRKIECPICR) adopts an RING-type zinc-finger fold.

The protein belongs to the RNF8 family. Homodimer. Forms a E2-E3 ubiquitin ligase complex composed of the RNF8 homodimer and a E2 heterodimer of UBE2N and UBE2V2. Interacts with class III E2s, including UBE2E1, UBE2E2, and UBE2E3 and with UBE2N. Interacts with RXRA. Interacts (via FHA domain) with ATM-phosphorylated MDC1. Interacts (via FHA domain) with 'Thr-4827' phosphorylated HERC2 (via C-terminus). Interacts with PIWIL1; leading to sequester RNF8 in the cytoplasm. Interacts with WRAP53/TCAB1. As to quaternary structure, (Microbial infection) Interacts (via FHA domain) with phosphorylated human herpesvirus 1 ICP0 protein; leading to RNF8 degradation by the proteasome. In terms of processing, autoubiquitinated through 'Lys-48' and 'Lys-63' of ubiquitin. 'Lys-63' polyubiquitination is mediated by UBE2N. 'Lys-29'-type polyubiquitination is also observed, but it doesn't require its own functional RING-type zinc finger. As to expression, ubiquitous. In fetal tissues, highest expression in brain, thymus and liver. In adult tissues, highest levels in brain and testis, lowest levels in peripheral blood cells.

The protein localises to the nucleus. The protein resides in the cytoplasm. Its subcellular location is the midbody. It is found in the chromosome. It localises to the telomere. It carries out the reaction S-ubiquitinyl-[E2 ubiquitin-conjugating enzyme]-L-cysteine + [acceptor protein]-L-lysine = [E2 ubiquitin-conjugating enzyme]-L-cysteine + N(6)-ubiquitinyl-[acceptor protein]-L-lysine.. Its pathway is protein modification; protein ubiquitination. Its function is as follows. E3 ubiquitin-protein ligase that plays a key role in DNA damage signaling via 2 distinct roles: by mediating the 'Lys-63'-linked ubiquitination of histones H2A and H2AX and promoting the recruitment of DNA repair proteins at double-strand breaks (DSBs) sites, and by catalyzing 'Lys-48'-linked ubiquitination to remove target proteins from DNA damage sites. Following DNA DSBs, it is recruited to the sites of damage by ATM-phosphorylated MDC1 and catalyzes the 'Lys-63'-linked ubiquitination of histones H2A and H2AX, thereby promoting the formation of TP53BP1 and BRCA1 ionizing radiation-induced foci (IRIF). Also controls the recruitment of UIMC1-BRCC3 (RAP80-BRCC36) and PAXIP1/PTIP to DNA damage sites. Promotes the recruitment of NBN to DNA damage sites by catalyzing 'Lys-6'-linked ubiquitination of NBN. Also recruited at DNA interstrand cross-links (ICLs) sites and catalyzes 'Lys-63'-linked ubiquitination of histones H2A and H2AX, leading to recruitment of FAAP20/C1orf86 and Fanconi anemia (FA) complex, followed by interstrand cross-link repair. H2A ubiquitination also mediates the ATM-dependent transcriptional silencing at regions flanking DSBs in cis, a mechanism to avoid collision between transcription and repair intermediates. Promotes the formation of 'Lys-63'-linked polyubiquitin chains via interactions with the specific ubiquitin-conjugating UBE2N/UBC13 and ubiquitinates non-histone substrates such as PCNA. Substrates that are polyubiquitinated at 'Lys-63' are usually not targeted for degradation. Also catalyzes the formation of 'Lys-48'-linked polyubiquitin chains via interaction with the ubiquitin-conjugating UBE2L6/UBCH8, leading to degradation of substrate proteins such as CHEK2, JMJD2A/KDM4A and KU80/XRCC5: it is still unclear how the preference toward 'Lys-48'- versus 'Lys-63'-linked ubiquitination is regulated but it could be due to RNF8 ability to interact with specific E2 specific ligases. For instance, interaction with phosphorylated HERC2 promotes the association between RNF8 and UBE2N/UBC13 and favors the specific formation of 'Lys-63'-linked ubiquitin chains. Promotes non-homologous end joining (NHEJ) by promoting the 'Lys-48'-linked ubiquitination and degradation the of KU80/XRCC5. Following DNA damage, mediates the ubiquitination and degradation of JMJD2A/KDM4A in collaboration with RNF168, leading to unmask H4K20me2 mark and promote the recruitment of TP53BP1 at DNA damage sites. Following DNA damage, mediates the ubiquitination and degradation of POLD4/p12, a subunit of DNA polymerase delta. In the absence of POLD4, DNA polymerase delta complex exhibits higher proofreading activity. In addition to its function in damage signaling, also plays a role in higher-order chromatin structure by mediating extensive chromatin decondensation. Involved in the activation of ATM by promoting histone H2B ubiquitination, which indirectly triggers histone H4 'Lys-16' acetylation (H4K16ac), establishing a chromatin environment that promotes efficient activation of ATM kinase. Required in the testis, where it plays a role in the replacement of histones during spermatogenesis. At uncapped telomeres, promotes the joining of deprotected chromosome ends by inducing H2A ubiquitination and TP53BP1 recruitment, suggesting that it may enhance cancer development by aggravating telomere-induced genome instability in case of telomeric crisis. Promotes the assembly of RAD51 at DNA DSBs in the absence of BRCA1 and TP53BP1 Also involved in class switch recombination in immune system, via its role in regulation of DSBs repair. May be required for proper exit from mitosis after spindle checkpoint activation and may regulate cytokinesis. May play a role in the regulation of RXRA-mediated transcriptional activity. Not involved in RXRA ubiquitination by UBE2E2. This Homo sapiens (Human) protein is E3 ubiquitin-protein ligase RNF8.